The sequence spans 63 residues: Large ribosomal subunit protein uL29 (63 aa).

This sequence belongs to the universal ribosomal protein uL29 family.

The chain is Large ribosomal subunit protein uL29 from Actinobacillus succinogenes (strain ATCC 55618 / DSM 22257 / CCUG 43843 / 130Z).